The sequence spans 680 residues: Pilus tip adhesin Cpa (680 aa).

Positions 62–211 (CFNLTKHFPS…IFQSSDKTFQ (150 aa)) form a cross-link, isoglutamyl cysteine thioester (Cys-Gln). Positions 217–236 (EYVPDTPPKPGEEPPAKTEK) are disordered. The segment covering 226–236 (PGEEPPAKTEK) has biased composition (basic and acidic residues). The isoaspartyl lysine isopeptide (Lys-Asp) cross-link spans 243-546 (KYAEGDYSKL…ELIDVISMED (304 aa)). The region spanning 253 to 311 (LEGATLKLAQIEGSGFQEKIFDSNKSGEKVELPNGTYVLSELKPPQGYGVATPITFKVA) is the CNA-B domain. Residues 374 to 526 (CFNADLHSPP…FFVPNSSRYQ (153 aa)) constitute a cross-link (isoglutamyl cysteine thioester (Cys-Gln)). Positions 562–667 (KTVTGTIADK…KEDETVAFEN (106 aa)) form a cross-link, isoaspartyl lysine isopeptide (Lys-Asn). Positions 672-676 (VPPTG) match the VPPTG sorting signal motif. A Threonyl lysine isopeptide (Thr-Lys) (interchain with K-? in major pilin subunit) cross-link involves residue Thr675. Positions 676-680 (GLTTD) are cleaved as a propeptide — removed by sortase.

In terms of assembly, monomer. Post-translationally, proteolytically processed and assembled in pili through a transpeptidation reaction catalyzed by a sortase, which leads to a covalent link between Cpa and a major pilin subunit.

The protein localises to the fimbrium. In terms of biological role, component of the pilus tip. Can bind covalently, via its two reactive thioester bonds, to molecular targets from host cell surface and can thus mediate adhesion of the streptococcal pili to host cells. Lysine side chains or a carbohydrate with a free amine group might be candidates for Cpa binding. In vitro, can covalently bind to spermidine, but it is unlikely that spermidine is the natural target of Cpa. This Streptococcus pyogenes protein is Pilus tip adhesin Cpa (cpa).